The sequence spans 139 residues: Small ribosomal subunit protein uS12 (139 aa).

The disordered stretch occupies residues 1–44 (MPTINQLVKKPRTSKVKKSTAPALNKGYNSHKKKATDLASPQKR). Basic residues predominate over residues 9-18 (KKPRTSKVKK). The residue at position 102 (D102) is a 3-methylthioaspartic acid.

The protein belongs to the universal ribosomal protein uS12 family. In terms of assembly, part of the 30S ribosomal subunit. Contacts proteins S8 and S17. May interact with IF1 in the 30S initiation complex.

In terms of biological role, with S4 and S5 plays an important role in translational accuracy. Functionally, interacts with and stabilizes bases of the 16S rRNA that are involved in tRNA selection in the A site and with the mRNA backbone. Located at the interface of the 30S and 50S subunits, it traverses the body of the 30S subunit contacting proteins on the other side and probably holding the rRNA structure together. The combined cluster of proteins S8, S12 and S17 appears to hold together the shoulder and platform of the 30S subunit. The sequence is that of Small ribosomal subunit protein uS12 from Macrococcus caseolyticus (strain JCSC5402) (Macrococcoides caseolyticum).